We begin with the raw amino-acid sequence, 152 residues long: Superoxide dismutase [Cu-Zn] 4A (152 aa).

The Cu cation site is built by His45, His47, and His62. Cysteines 56 and 145 form a disulfide. Zn(2+) is bound by residues His62, His70, His79, and Asp82. A Cu cation-binding site is contributed by His119.

This sequence belongs to the Cu-Zn superoxide dismutase family. In terms of assembly, homodimer. Requires Cu cation as cofactor. It depends on Zn(2+) as a cofactor.

The protein resides in the cytoplasm. It catalyses the reaction 2 superoxide + 2 H(+) = H2O2 + O2. Its function is as follows. Destroys radicals which are normally produced within the cells and which are toxic to biological systems. This Zea mays (Maize) protein is Superoxide dismutase [Cu-Zn] 4A (SODCC.3).